The sequence spans 421 residues: UDP-N-acetylglucosamine 1-carboxyvinyltransferase (421 aa).

Lys22 to Asn23 provides a ligand contact to phosphoenolpyruvate. Arg94 is a binding site for UDP-N-acetyl-alpha-D-glucosamine. The active-site Proton donor is Cys118. Position 118 is a 2-(S-cysteinyl)pyruvic acid O-phosphothioketal (Cys118). UDP-N-acetyl-alpha-D-glucosamine is bound by residues Lys163–Val166, Asp308, and Ile330.

Belongs to the EPSP synthase family. MurA subfamily.

The protein resides in the cytoplasm. It carries out the reaction phosphoenolpyruvate + UDP-N-acetyl-alpha-D-glucosamine = UDP-N-acetyl-3-O-(1-carboxyvinyl)-alpha-D-glucosamine + phosphate. It participates in cell wall biogenesis; peptidoglycan biosynthesis. Cell wall formation. Adds enolpyruvyl to UDP-N-acetylglucosamine. The chain is UDP-N-acetylglucosamine 1-carboxyvinyltransferase from Orientia tsutsugamushi (strain Boryong) (Rickettsia tsutsugamushi).